The chain runs to 126 residues: Lymphocyte antigen 6 complex locus protein G6c (126 aa).

The signal sequence occupies residues 1 to 19 (MKHLLLLTLSALLYCWVSA). Positions 21 to 112 (TRCHSCYKVP…PRPTPALALI (92 aa)) constitute a UPAR/Ly6 domain. 3 cysteine pairs are disulfide-bonded: cysteine 23/cysteine 48, cysteine 26/cysteine 34, and cysteine 40/cysteine 66. Residue asparagine 89 is glycosylated (N-linked (GlcNAc...) (high mannose) asparagine). An intrachain disulfide couples cysteine 93 to cysteine 98. Serine 100 carries the GPI-anchor amidated serine lipid modification. Positions 101-126 (PAPRPTPALALISLTSLAGLGLWLLH) are cleaved as a propeptide — removed in mature form.

Monomer. Post-translationally, N-glycosylated. In terms of tissue distribution, highly expressed at the leading edges of cells, on filopodia.

It localises to the cell membrane. This Mus musculus (Mouse) protein is Lymphocyte antigen 6 complex locus protein G6c (Ly6g6c).